Reading from the N-terminus, the 662-residue chain is Glutathione hydrolase 7 (662 aa).

Residues 1–106 are Cytoplasmic-facing; the sequence is MAAENEASQE…AAECSCRQDG (106 aa). Residues Ser-17, Ser-72, Ser-79, and Ser-83 each carry the phosphoserine modification. The segment at 26–90 is disordered; sequence SFPRLPEDEP…DGSPLRETRK (65 aa). Residues 72–83 show a composition bias toward low complexity; sequence SSSSEMGSQDGS. The helical; Signal-anchor for type II membrane protein transmembrane segment at 107–127 threads the bilayer; it reads LTVIVTACLTFATGVTVALVM. Topologically, residues 128-662 are extracellular; that stretch reads QIYFGDPQIF…SPDAAGATIL (535 aa). N-linked (GlcNAc...) asparagine glycans are attached at residues Asn-198, Asn-267, Asn-283, Asn-330, Asn-353, Asn-394, Asn-452, Asn-519, Asn-523, and Asn-586.

It belongs to the gamma-glutamyltransferase family. As to quaternary structure, interacts with TLCD3A. Heterodimer composed of the light and heavy chains. The active site is located in the light chain. In terms of processing, cleaved by autocatalysis into a large and a small subunit and the autocatalytic cleavage is essential to the functional activation of the enzyme. Widely expressed, but at low level, except in the airway epithelial cells. Detected in brain, heart, kidney, liver, lung, spleen, testis and trachea.

It is found in the membrane. The catalysed reaction is an N-terminal (5-L-glutamyl)-[peptide] + an alpha-amino acid = 5-L-glutamyl amino acid + an N-terminal L-alpha-aminoacyl-[peptide]. It carries out the reaction glutathione + H2O = L-cysteinylglycine + L-glutamate. It catalyses the reaction an S-substituted glutathione + H2O = an S-substituted L-cysteinylglycine + L-glutamate. Its pathway is sulfur metabolism; glutathione metabolism. Its function is as follows. Hydrolyzes and transfers gamma-glutamyl moieties from glutathione and other gamma-glutamyl compounds to acceptors. The chain is Glutathione hydrolase 7 from Homo sapiens (Human).